Reading from the N-terminus, the 424-residue chain is Glutamyl-tRNA reductase (424 aa).

Substrate-binding positions include 49-52 (TCNR), Ser107, 112-114 (EPQ), and Gln118. Cys50 (nucleophile) is an active-site residue. Residue 187-192 (GAGETI) participates in NADP(+) binding.

This sequence belongs to the glutamyl-tRNA reductase family. As to quaternary structure, homodimer.

The enzyme catalyses (S)-4-amino-5-oxopentanoate + tRNA(Glu) + NADP(+) = L-glutamyl-tRNA(Glu) + NADPH + H(+). It functions in the pathway porphyrin-containing compound metabolism; protoporphyrin-IX biosynthesis; 5-aminolevulinate from L-glutamyl-tRNA(Glu): step 1/2. In terms of biological role, catalyzes the NADPH-dependent reduction of glutamyl-tRNA(Glu) to glutamate 1-semialdehyde (GSA). This chain is Glutamyl-tRNA reductase, found in Chromohalobacter salexigens (strain ATCC BAA-138 / DSM 3043 / CIP 106854 / NCIMB 13768 / 1H11).